A 193-amino-acid chain; its full sequence is Large ribosomal subunit protein eL19B (193 aa).

Positions glutamate 157–glutamate 179 are disordered. A compositionally biased stretch (basic residues) spans alanine 164 to alanine 174.

This sequence belongs to the eukaryotic ribosomal protein eL19 family. In terms of assembly, component of the large ribosomal subunit (LSU). Mature yeast ribosomes consist of a small (40S) and a large (60S) subunit. The 40S small subunit contains 1 molecule of ribosomal RNA (18S rRNA) and at least 33 different proteins. The large 60S subunit contains 3 rRNA molecules (25S, 5.8S and 5S rRNA) and at least 46 different proteins. eL19 lies in close proximity to the binding site for eukaryotic initiation factor eIF4G.

It localises to the cytoplasm. Functionally, component of the ribosome, a large ribonucleoprotein complex responsible for the synthesis of proteins in the cell. The small ribosomal subunit (SSU) binds messenger RNAs (mRNAs) and translates the encoded message by selecting cognate aminoacyl-transfer RNA (tRNA) molecules. The large subunit (LSU) contains the ribosomal catalytic site termed the peptidyl transferase center (PTC), which catalyzes the formation of peptide bonds, thereby polymerizing the amino acids delivered by tRNAs into a polypeptide chain. The nascent polypeptides leave the ribosome through a tunnel in the LSU and interact with protein factors that function in enzymatic processing, targeting, and the membrane insertion of nascent chains at the exit of the ribosomal tunnel. eL19 may play a role in the last stages of translation initiation, in particular subunit joining and shedding/releasing factors. This Schizosaccharomyces pombe (strain 972 / ATCC 24843) (Fission yeast) protein is Large ribosomal subunit protein eL19B (rpl1902).